Reading from the N-terminus, the 288-residue chain is Polyketide biosynthesis malonyl CoA-acyl carrier protein transacylase PksC (288 aa).

Active-site residues include S87 and H193.

This sequence belongs to the FabD family.

It is found in the cytoplasm. It catalyses the reaction holo-[ACP] + malonyl-CoA = malonyl-[ACP] + CoA. It participates in antibiotic biosynthesis; bacillaene biosynthesis. Functionally, involved in some intermediate steps for the synthesis of the antibiotic polyketide bacillaene which is involved in secondary metabolism. It catalyzes the transfer of the malonyl-CoA group to the acyl-carrier-protein AcpK (Mal-AcpK). The chain is Polyketide biosynthesis malonyl CoA-acyl carrier protein transacylase PksC (pksC) from Bacillus subtilis (strain 168).